The chain runs to 244 residues: Meiotic drive suppressor wtf2 (244 aa).

Polar residues predominate over residues Met-1–Ser-10. The disordered stretch occupies residues Met-1–Asp-68. The segment covering Glu-17–Pro-30 has biased composition (basic and acidic residues). The next 4 helical transmembrane spans lie at Phe-73 to Cys-93, Trp-110 to Phe-130, Trp-149 to Pro-169, and Leu-183 to Ala-203.

Belongs to the WTF family. As to quaternary structure, homomer. Interacts with other proteins that exhibit high sequence similarity.

It localises to the spore membrane. The protein resides in the vacuole membrane. In terms of biological role, acts as a suppressor component of the dual wtf meiotic drive system, and can suppress but not confer meiotic drive by compatible poisons. Wtf meiotic drive systems promote unequal transmission of alleles from the parental zygote to progeny spores by encoding a poison and an antidote from the same locus; the poison is trans-acting and forms toxic aggregates in all spores within an ascus, wherease the antidote is spore-specific and targets aggregates for degradation by the vacuole. Meiotic drive by wtf systems therefore lead to poisoning of all progeny that do not inherit the dual poison/antidote allele, or express a compatible antidote. The polypeptide is Meiotic drive suppressor wtf2 (Schizosaccharomyces kambucha (Fission yeast)).